The primary structure comprises 689 residues: DNA ligase (689 aa).

NAD(+) contacts are provided by residues Asp40–Asp44, Ser89–Leu90, and Glu121. The active-site N6-AMP-lysine intermediate is the Lys123. 4 residues coordinate NAD(+): Arg144, Glu179, Lys295, and Lys319. The Zn(2+) site is built by Cys413, Cys416, Cys431, and Cys437. The BRCT domain maps to Arg610–Val689.

It belongs to the NAD-dependent DNA ligase family. LigA subfamily. Mg(2+) serves as cofactor. The cofactor is Mn(2+).

The enzyme catalyses NAD(+) + (deoxyribonucleotide)n-3'-hydroxyl + 5'-phospho-(deoxyribonucleotide)m = (deoxyribonucleotide)n+m + AMP + beta-nicotinamide D-nucleotide.. In terms of biological role, DNA ligase that catalyzes the formation of phosphodiester linkages between 5'-phosphoryl and 3'-hydroxyl groups in double-stranded DNA using NAD as a coenzyme and as the energy source for the reaction. It is essential for DNA replication and repair of damaged DNA. The sequence is that of DNA ligase from Rickettsia africae (strain ESF-5).